The sequence spans 288 residues: Ribosomal RNA small subunit methyltransferase I (288 aa).

This sequence belongs to the methyltransferase superfamily. RsmI family.

The protein resides in the cytoplasm. It catalyses the reaction cytidine(1402) in 16S rRNA + S-adenosyl-L-methionine = 2'-O-methylcytidine(1402) in 16S rRNA + S-adenosyl-L-homocysteine + H(+). Catalyzes the 2'-O-methylation of the ribose of cytidine 1402 (C1402) in 16S rRNA. The sequence is that of Ribosomal RNA small subunit methyltransferase I from Vibrio cholerae serotype O1 (strain ATCC 39315 / El Tor Inaba N16961).